Reading from the N-terminus, the 449-residue chain is Nucleoporin NUP42 (449 aa).

Residues 1–25 (MAICSFFLQGRCRYGEKCWNEHPRG) form a C3H1-type zinc finger. Disordered stretches follow at residues 22–84 (HPRG…GFDN) and 218–237 (DMTS…SSFP). Composition is skewed to polar residues over residues 47 to 83 (WGSS…SGFD) and 218 to 227 (DMTSGYNGQQ). FG repeat units follow at residues 231–232 (FG), 274–275 (FG), 284–285 (FG), 305–306 (FG), 314–315 (FG), 335–336 (FG), and 347–348 (FG).

In terms of assembly, probable component of the nuclear pore complex (NPC).

It localises to the nucleus. Its subcellular location is the nuclear pore complex. It is found in the nucleus membrane. Its function is as follows. Required for the export of mRNAs containing poly(A) tails from the nucleus into the cytoplasm. The chain is Nucleoporin NUP42 (nup42) from Xenopus tropicalis (Western clawed frog).